The sequence spans 262 residues: Pimeloyl-[acyl-carrier protein] methyl ester esterase (262 aa).

The AB hydrolase-1 domain occupies 15 to 242 (HLVLLHGWGL…AAHAPFISHP (228 aa)). Residues tryptophan 22, 82–83 (SL), and 143–147 (FLALQ) contribute to the substrate site. The active-site Nucleophile is the serine 82. Catalysis depends on residues aspartate 207 and histidine 235. Histidine 235 contacts substrate.

This sequence belongs to the AB hydrolase superfamily. Carboxylesterase BioH family. As to quaternary structure, monomer.

The protein localises to the cytoplasm. The enzyme catalyses 6-carboxyhexanoyl-[ACP] methyl ester + H2O = 6-carboxyhexanoyl-[ACP] + methanol + H(+). It participates in cofactor biosynthesis; biotin biosynthesis. In terms of biological role, the physiological role of BioH is to remove the methyl group introduced by BioC when the pimeloyl moiety is complete. It allows to synthesize pimeloyl-ACP via the fatty acid synthetic pathway through the hydrolysis of the ester bonds of pimeloyl-ACP esters. The chain is Pimeloyl-[acyl-carrier protein] methyl ester esterase from Shigella flexneri.